The primary structure comprises 131 residues: Antileukoproteinase (131 aa).

The first 25 residues, 1 to 25 (MKSCGLLPFTVLLALGILAPWTVEG), serve as a signal peptide directing secretion. 2 WAP domains span residues 29-77 (DAIK…VNPV) and 83-131 (VWRK…LPPM). Cystine bridges form between Cys-36-Cys-65, Cys-44-Cys-69, Cys-52-Cys-64, Cys-58-Cys-73, Cys-90-Cys-119, Cys-97-Cys-123, Cys-106-Cys-118, and Cys-112-Cys-127. The interval 85–131 (RKPGRCVKTQARCMMLNPPNVCQRDGQCDGKYKCCEGICGKVCLPPM) is elastase inhibitory domain.

In terms of assembly, interacts with GRN; interaction protects progranulin from proteolysis. As to expression, detected in bronchial epithelial cells. Detected in bronchoalveolar fluid after infection with M.tuberculosis (at protein level). Highest expression in lung, spleen, intestine and epididymis with lower levels in liver and seminal vesicle. No expression in brain, heart, kidney and muscle.

It localises to the secreted. In terms of biological role, acid-stable proteinase inhibitor with strong affinities for trypsin, chymotrypsin, elastase, and cathepsin G. Modulates the innate immune response after bacterial infection. Contributes to regulate the inflammatory and immune responses to the intracellular parasite L.major. Down-regulates responses to bacterial lipopolysaccharide (LPS). Plays a role in regulating the activation of NF-kappa-B and inflammatory responses. Has antimicrobial activity against mycobacteria, but not against salmonella. Contributes to normal resistance against infection by M.tuberculosis. Required for normal resistance to L.major. Required for normal wound healing, probably by preventing tissue damage by limiting protease activity. Together with ELANE, required for normal differentiation and proliferation of bone marrow myeloid cells. This Mus musculus (Mouse) protein is Antileukoproteinase (Slpi).